The primary structure comprises 844 residues: Neuronal PAS domain-containing protein 4B (844 aa).

The interval 61 to 74 (KMYRSTKGASKARR) is basic motif; degenerate. The region spanning 61-114 (KMYRSTKGASKARRDQINAEIRSLKELLPISDADKARLSYLHIMSLACIYTRKS) is the bHLH domain. The tract at residues 75-114 (DQINAEIRSLKELLPISDADKARLSYLHIMSLACIYTRKS) is helix-loop-helix motif. PAS domains are found at residues 132 to 190 (SLPE…PVDH) and 294 to 343 (DMRI…LHNG). Residues 410-422 (SRQSSDPLSSPDQ) are compositionally biased toward polar residues. 4 disordered regions span residues 410 to 432 (SRQS…SGLS), 444 to 479 (GRSS…GGGH), 702 to 725 (PLPN…SYSQ), and 757 to 784 (TEGG…EAPA). Pro residues predominate over residues 704-716 (PNLPSPSPVPPSP).

In terms of assembly, efficient DNA binding requires dimerization with another bHLH protein.

The protein resides in the nucleus. Transcription factor expressed in neurons of the brain that regulates the excitatory-inhibitory balance within neural circuits and is required for contextual memory in the hippocampus. Plays a key role in the structural and functional plasticity of neurons. Acts as an early-response transcription factor in both excitatory and inhibitory neurons, where it induces distinct but overlapping sets of late-response genes in these two types of neurons, allowing the synapses that form on inhibitory and excitatory neurons to be modified by neuronal activity in a manner specific to their function within a circuit, thereby facilitating appropriate circuit responses to sensory experience. The chain is Neuronal PAS domain-containing protein 4B (npas4b) from Danio rerio (Zebrafish).